The chain runs to 235 residues: Phosphoribosylaminoimidazole-succinocarboxamide synthase (235 aa).

The protein belongs to the SAICAR synthetase family.

It carries out the reaction 5-amino-1-(5-phospho-D-ribosyl)imidazole-4-carboxylate + L-aspartate + ATP = (2S)-2-[5-amino-1-(5-phospho-beta-D-ribosyl)imidazole-4-carboxamido]succinate + ADP + phosphate + 2 H(+). The protein operates within purine metabolism; IMP biosynthesis via de novo pathway; 5-amino-1-(5-phospho-D-ribosyl)imidazole-4-carboxamide from 5-amino-1-(5-phospho-D-ribosyl)imidazole-4-carboxylate: step 1/2. The protein is Phosphoribosylaminoimidazole-succinocarboxamide synthase of Clostridium perfringens (strain 13 / Type A).